Here is a 514-residue protein sequence, read N- to C-terminus: 3-octaprenyl-4-hydroxybenzoate carboxy-lyase (514 aa).

Mn(2+) is bound at residue Asn177. Residues 180–182, 194–196, and 199–200 contribute to the prenylated FMN site; these read IYR, RWL, and RG. Residue Glu243 coordinates Mn(2+). Asp314 serves as the catalytic Proton donor.

The protein belongs to the UbiD family. Homohexamer. The cofactor is prenylated FMN. Mn(2+) serves as cofactor.

The protein resides in the cell membrane. The enzyme catalyses a 4-hydroxy-3-(all-trans-polyprenyl)benzoate + H(+) = a 2-(all-trans-polyprenyl)phenol + CO2. The protein operates within cofactor biosynthesis; ubiquinone biosynthesis. Catalyzes the decarboxylation of 3-octaprenyl-4-hydroxy benzoate to 2-octaprenylphenol, an intermediate step in ubiquinone biosynthesis. The protein is 3-octaprenyl-4-hydroxybenzoate carboxy-lyase of Bordetella petrii (strain ATCC BAA-461 / DSM 12804 / CCUG 43448).